We begin with the raw amino-acid sequence, 213 residues long: Virion protein US10 homolog (213 aa).

This sequence belongs to the herpesviridae US10 family. Phosphorylated.

It localises to the virion tegument. The protein localises to the host nucleus matrix. The chain is Virion protein US10 homolog (US639) from Gallid herpesvirus 2 (strain GA) (GaHV-2).